Consider the following 263-residue polypeptide: Single-stranded DNA-binding protein WHY1, chloroplastic (263 aa).

The N-terminal 47 residues, 1-47 (MSQLLSTPLMAVNSNPRFLSSSSVLVTGGFAVKRHGFALKPTTKTVK), are a transit peptide targeting the chloroplast. The required for ssDNA binding stretch occupies residues 89 to 94 (KGKAAL). The Nuclear localization signal motif lies at 167 to 180 (KGKSDEGKVRKVLK).

The protein belongs to the Whirly family. As to quaternary structure, homotetramer.

Its subcellular location is the plastid. The protein localises to the chloroplast. The protein resides in the nucleus. In terms of biological role, single-stranded DNA-binding protein that functions in both chloroplasts and nucleus. In chloroplasts, maintains plastid genome stability by preventing break-induced and short homology-dependent illegitimate recombinations. In nucleus, modulates telomere length homeostasis by inhibiting the action of the telomerase at the extreme termini of chromosomes. Is recruited to a distal element upstream of the kinesin KP1 to mediate the transcriptional repression of KP1. Is required for full salicylic acid-dependent plant disease resistance responses. Can bind double-stranded DNA in vivo. This is Single-stranded DNA-binding protein WHY1, chloroplastic (WHY1) from Arabidopsis thaliana (Mouse-ear cress).